A 202-amino-acid chain; its full sequence is FMN-dependent NADH:quinone oxidoreductase 2 (202 aa).

FMN-binding positions include Ser9, 15–17, and 95–98; these read SAS and MWNL.

The protein belongs to the azoreductase type 1 family. In terms of assembly, homodimer. FMN is required as a cofactor.

It catalyses the reaction 2 a quinone + NADH + H(+) = 2 a 1,4-benzosemiquinone + NAD(+). It carries out the reaction N,N-dimethyl-1,4-phenylenediamine + anthranilate + 2 NAD(+) = 2-(4-dimethylaminophenyl)diazenylbenzoate + 2 NADH + 2 H(+). In terms of biological role, quinone reductase that provides resistance to thiol-specific stress caused by electrophilic quinones. Its function is as follows. Also exhibits azoreductase activity. Catalyzes the reductive cleavage of the azo bond in aromatic azo compounds to the corresponding amines. The chain is FMN-dependent NADH:quinone oxidoreductase 2 from Hahella chejuensis (strain KCTC 2396).